The following is a 548-amino-acid chain: Protein swallow (548 aa).

3 disordered regions span residues 67 to 109 (AKTC…GRSS), 184 to 206 (NCQTHSNSDSNYNSNSNNSSSSF), and 358 to 428 (FSSV…ELIS). The span at 79–91 (QEDEDDYDEDVDG) shows a compositional bias: acidic residues. A compositionally biased stretch (low complexity) spans 189–205 (SNSDSNYNSNSNNSSSS). Phosphoserine occurs at positions 362 and 368. Polar residues predominate over residues 388–402 (APNNSETSQPSSNDS). The segment covering 406–420 (VEAHEEERPSSRRQW) has biased composition (basic and acidic residues). Residues S463, S471, S475, S483, S485, and S487 each carry the phosphoserine modification.

In terms of assembly, may be a homo- or heterodimer.

It localises to the nucleus. Has a role in localizing bicoid mRNA at the anterior margin of the oocyte during oogenesis, and a poorly characterized role in nuclear divisions in early embryogenesis. In Drosophila melanogaster (Fruit fly), this protein is Protein swallow (swa).